A 301-amino-acid polypeptide reads, in one-letter code: Glycine--tRNA ligase alpha subunit (301 aa).

The protein belongs to the class-II aminoacyl-tRNA synthetase family. As to quaternary structure, tetramer of two alpha and two beta subunits.

The protein localises to the cytoplasm. It carries out the reaction tRNA(Gly) + glycine + ATP = glycyl-tRNA(Gly) + AMP + diphosphate. The sequence is that of Glycine--tRNA ligase alpha subunit from Shewanella halifaxensis (strain HAW-EB4).